The chain runs to 269 residues: Imidazoleglycerol-phosphate dehydratase 2, chloroplastic (269 aa).

Residues 1-51 constitute a chloroplast transit peptide; that stretch reads MTTAPFLFPSLSRLHSARASSFPKPPVGSGAGVAFPARPYGSSLRLRSSVM. Substrate-binding positions include Glu83, 109–117, 135–139, Arg161, and Arg183; these read HMLDQLASH and HHSNE. Residues His109, His135, His136, and Glu139 each contribute to the Mn(2+) site. Mn(2+) is bound by residues His207, His231, His232, and Glu235. Residues 231-239 and 261-263 each bind substrate; these read HHIIEATFK and SSK.

Belongs to the imidazoleglycerol-phosphate dehydratase family. Mn(2+) serves as cofactor.

The protein localises to the plastid. The protein resides in the chloroplast. It catalyses the reaction D-erythro-1-(imidazol-4-yl)glycerol 3-phosphate = 3-(imidazol-4-yl)-2-oxopropyl phosphate + H2O. It participates in amino-acid biosynthesis; L-histidine biosynthesis; L-histidine from 5-phospho-alpha-D-ribose 1-diphosphate: step 6/9. This is Imidazoleglycerol-phosphate dehydratase 2, chloroplastic from Triticum aestivum (Wheat).